The chain runs to 125 residues: Probable 4-amino-4-deoxy-L-arabinose-phosphoundecaprenol flippase subunit ArnF (125 aa).

The Cytoplasmic portion of the chain corresponds to 1–2 (MG). Residues 3–23 (VMWGLISVAIASLAQLSLGFA) form a helical membrane-spanning segment. The Periplasmic segment spans residues 24 to 33 (MMRLPSIAHP). A helical transmembrane segment spans residues 34–54 (LAFISGLGAFNAATLALFAGL). At 55-76 (AGYLVSVFCWQKTLHMLALSKA) the chain is on the cytoplasmic side. A helical membrane pass occupies residues 77 to 97 (YALLSLSYVLVWVASMLLPGL). At 98–100 (QGA) the chain is on the periplasmic side. A helical transmembrane segment spans residues 101-121 (FSLKAMLGVLCIMAGVMLIFL). Residues 122-125 (PARS) are Cytoplasmic-facing.

The protein belongs to the ArnF family. In terms of assembly, heterodimer of ArnE and ArnF.

Its subcellular location is the cell inner membrane. It functions in the pathway bacterial outer membrane biogenesis; lipopolysaccharide biosynthesis. Functionally, translocates 4-amino-4-deoxy-L-arabinose-phosphoundecaprenol (alpha-L-Ara4N-phosphoundecaprenol) from the cytoplasmic to the periplasmic side of the inner membrane. This Salmonella paratyphi A (strain ATCC 9150 / SARB42) protein is Probable 4-amino-4-deoxy-L-arabinose-phosphoundecaprenol flippase subunit ArnF.